The following is a 334-amino-acid chain: MSPSFKSTAILGAVALAARVRAHGYVSGIVVDGAYHGGYIVDKYPYMPNPPDVVGWSTTATDLGFVAPDAFGDPDIICHRDGAPGAIHAKVNAGATIELQWNTWPESHHGPVIDYLANCNGDCSSVDKTSLKFFKISEAGLNDGSNAPGQWASDDLIANNNSWTVTIPKSIAPGNYVLRHEIIALHSAGNQNGAQNYPQCFNLEITSNGSDNPEGVLGTELYKADDPGILFNIYQPMDSYPIPGPALYTGGSSPSPNPPTSTQSPVPQPTQSPPSGSNPGNGNGDDDNDNGNETPSPSLPVEIPDDLTSRELLLVAQEIIARLLELQNQLVVSN.

A signal peptide spans 1 to 22 (MSPSFKSTAILGAVALAARVRA). H23 and H108 together coordinate Cu(2+). Disulfide bonds link C78/C200 and C119/C123. Residue N160 is glycosylated (N-linked (GlcNAc...) asparagine). O2 is bound by residues H186 and Q195. Y197 contributes to the Cu(2+) binding site. Residue N208 is glycosylated (N-linked (GlcNAc...) asparagine). Positions 244 to 304 (GPALYTGGSS…PSPSLPVEIP (61 aa)) are disordered. Positions 249–265 (TGGSSPSPNPPTSTQSP) are enriched in low complexity.

This sequence belongs to the polysaccharide monooxygenase AA9 family. Cu(2+) serves as cofactor.

The protein localises to the secreted. It carries out the reaction [(1-&gt;4)-beta-D-glucosyl]n+m + reduced acceptor + O2 = 4-dehydro-beta-D-glucosyl-[(1-&gt;4)-beta-D-glucosyl]n-1 + [(1-&gt;4)-beta-D-glucosyl]m + acceptor + H2O.. In terms of biological role, lytic polysaccharide monooxygenase (LPMO) that depolymerizes crystalline and amorphous polysaccharides via the oxidation of scissile alpha- or beta-(1-4)-glycosidic bonds, yielding C1 or C4 oxidation products. Catalysis by LPMOs requires the reduction of the active-site copper from Cu(II) to Cu(I) by a reducing agent and H(2)O(2) or O(2) as a cosubstrate. Active on hemicelluloses, including xylan, glucomannan, and xyloglucan. Shows clear activity on cellooligosaccharides, generating C4 oxidation products. Also displays activity on konjac glucomannan (KGM), a linear beta-1,4-linked mannan with randomly distributed glucosyl residues; as well as trace activity on lichenan, a linear beta-1,3-beta-1,4-glucan with a 1:2 ratio of beta-1,3 to beta-1,4 linkages. Has no activity on ivory nut mannan (INM), a linear beta-1,4-linked mannan without substitutions. The protein is AA9 family lytic polysaccharide monooxygenase A of Malbranchea cinnamomea (Thermophilic fungus).